A 249-amino-acid polypeptide reads, in one-letter code: LLMCNLCFADICFTSASIPTNLVNIQTKNKVITYEGCISQVYFFILFGVLDNFLLAVMAYDRYVAICHPLHYTVIMNRRLCGLLVLGSWVTTALNSLLQSSMALRLSFCTDLKIPHFVCELNQLVLLACNDTFPNDMVMYFAAVLLGGGPLAGILYSYSKIVSSIRAISSSQGKYKAFSTCASHLSVVSLFYSTLLGVYLSSSFTQNSHSTARASVMYSVVTPMLNPFIYSLRNKDLMGALRRLFRRKP.

Residues 1–9 (LLMCNLCFA) traverse the membrane as a helical segment. Over 10-40 (DICFTSASIPTNLVNIQTKNKVITYEGCISQ) the chain is Extracellular. A disulfide bridge connects residues C37 and C119. The chain crosses the membrane as a helical span at residues 41–60 (VYFFILFGVLDNFLLAVMAY). Over 61–82 (DRYVAICHPLHYTVIMNRRLCG) the chain is Cytoplasmic. The helical transmembrane segment at 83–103 (LLVLGSWVTTALNSLLQSSMA) threads the bilayer. Over 104-136 (LRLSFCTDLKIPHFVCELNQLVLLACNDTFPND) the chain is Extracellular. N130 carries N-linked (GlcNAc...) asparagine glycosylation. A helical transmembrane segment spans residues 137–158 (MVMYFAAVLLGGGPLAGILYSY). At 159–180 (SKIVSSIRAISSSQGKYKAFST) the chain is on the cytoplasmic side. Residues 181–200 (CASHLSVVSLFYSTLLGVYL) traverse the membrane as a helical segment. Over 201–210 (SSSFTQNSHS) the chain is Extracellular. The chain crosses the membrane as a helical span at residues 211–232 (TARASVMYSVVTPMLNPFIYSL). Over 233–249 (RNKDLMGALRRLFRRKP) the chain is Cytoplasmic.

This sequence belongs to the G-protein coupled receptor 1 family. In terms of tissue distribution, tongue specific.

It is found in the cell membrane. In terms of biological role, possible taste receptor. The sequence is that of Olfactory receptor 1571 (Olr1571) from Rattus norvegicus (Rat).